Consider the following 920-residue polypeptide: Plasma membrane ATPase (920 aa).

Residues 1–77 (MADHSASGAP…TPGGGRVVPE (77 aa)) are disordered. Residues 1–115 (MADHSASGAP…KEEKENHFLK (115 aa)) lie on the Cytoplasmic side of the membrane. Acidic residues predominate over residues 38–51 (EDDEDEDIDALIED). The helical transmembrane segment at 116 to 138 (FLGFFVGPIQFVMEGAAVLAAGL) threads the bilayer. Residues 139 to 140 (ED) lie on the Extracellular side of the membrane. Residues 141–160 (WVDFGVICGLLLLNAVVGFV) form a helical membrane-spanning segment. Residues 161 to 291 (QEFQAGSIVD…GSGHFTEVLN (131 aa)) lie on the Cytoplasmic side of the membrane. A helical membrane pass occupies residues 292–314 (GIGTILLILVIFTLLIVWVSSFY). Over 315–321 (RSNPIVQ) the chain is Extracellular. A helical transmembrane segment spans residues 322-354 (ILEFTLAITIIGVPVGLPAVVTTTMAVGAAYLA). Residues 355 to 687 (KKKAIVQKLS…LKTSRQIFHR (333 aa)) are Cytoplasmic-facing. Asp-378 functions as the 4-aspartylphosphate intermediate in the catalytic mechanism. Asp-634 and Asp-638 together coordinate Mg(2+). The helical transmembrane segment at 688–713 (MYAYVVYRIALSIHLEIFLGLWIAIL) threads the bilayer. Over 714 to 720 (NRSLNIE) the chain is Extracellular. Residues 721–738 (LVVFIAIFADVATLAIAY) form a helical membrane-spanning segment. Topologically, residues 739–754 (DNAPYSQTPVKWNLPK) are cytoplasmic. Residues 755-779 (LWGMSVLLGVVLAVGTWITVTTMYA) traverse the membrane as a helical segment. Over 780–806 (QGENGGIVQNFGNMDEVLFLQISLTEN) the chain is Extracellular. 2 helical membrane passes run 807 to 826 (WLIFITRANGPFWSSIPSWQ) and 827 to 847 (LSGAIFLVDILATCFTIWGWF). Residues 848–853 (EHSDTS) lie on the Extracellular side of the membrane. A helical membrane pass occupies residues 854-878 (IVAVVRIWIFSFGIFCIMGGVYYIL). Residues 879–920 (QDSVGFDNLMHGKSPKGNQKQRSLEDFVVSLQRVSTQHEKSQ) lie on the Cytoplasmic side of the membrane.

It belongs to the cation transport ATPase (P-type) (TC 3.A.3) family. Type IIIA subfamily.

The protein localises to the cell membrane. The catalysed reaction is ATP + H2O + H(+)(in) = ADP + phosphate + 2 H(+)(out). Its function is as follows. The plasma membrane ATPase of plants and fungi is a hydrogen ion pump. The proton gradient it generates drives the active transport of nutrients by H(+)-symport. The resulting external acidification and/or internal alkinization may mediate growth responses. This chain is Plasma membrane ATPase (pma-1), found in Neurospora crassa (strain ATCC 24698 / 74-OR23-1A / CBS 708.71 / DSM 1257 / FGSC 987).